Consider the following 329-residue polypeptide: UPF0158 protein CT_429 (329 aa).

Residues Gly292–Ser329 form a disordered region. Residues Ser295 to Glu313 show a composition bias toward acidic residues. The segment covering Lys317–Ser329 has biased composition (basic residues).

Belongs to the UPF0158 family.

The protein is UPF0158 protein CT_429 of Chlamydia trachomatis serovar D (strain ATCC VR-885 / DSM 19411 / UW-3/Cx).